A 101-amino-acid chain; its full sequence is MDKSKRSFLKSKRSVRRRLPPIQSGDLIDYRNMSLISRFISEQGKILSRRVNRLTLKQQRLITVAIKQARILSLLPFLNNEKQFERTESTARTTGLRTRNK.

This sequence belongs to the bacterial ribosomal protein bS18 family. As to quaternary structure, part of the 30S ribosomal subunit.

It is found in the plastid. The protein resides in the chloroplast. The sequence is that of Small ribosomal subunit protein bS18c from Coffea arabica (Arabian coffee).